The following is a 421-amino-acid chain: MRGLVNKLVSRSLSISGKWQNQQLRRLNIHEYQGAELMGKYGVNVPKGVAASSLEEVKKAIQDVFPNESELVVKSQILAGGRGLGTFKSGLKGGVHIVKRDEAEEIAGKMLGQVLVTKQTGPQGKVVSKVYLCEKLSLVNEMYFSIILDRKSAGPLIIACKKGGTSIEDLAEKFPDMIIKVPIDVFAGITDEDAAKVVDGLAPKAADRKDSIEQVKKLYELFRKTDCTMLEINPLAETSTNQLVAADAKLNFDDNAAFRQKEVFAMRDPTQEDPREVAAAKVDLNYIGLDGEIGCMVNGAGLAMATMDIIKLHGGTPANFLDVGGNASEHQVVEAFKILTSDDKVKAILVNIFGGIMKCDVIASGIVNAAKEVALKVPVVVRLEGTNVEQGKRILKESGMKLITADDLDDAAEKAVKALAH.

Residues 1–26 (MRGLVNKLVSRSLSISGKWQNQQLRR) constitute a mitochondrion transit peptide. The 244-residue stretch at 35–278 (AELMGKYGVN…PTQEDPREVA (244 aa)) folds into the ATP-grasp domain. ATP contacts are provided by residues Lys-74, 81–83 (GRG), and Glu-141. Residues Asn-233 and Asp-247 each coordinate Mg(2+). Residues Asn-298 and 355-357 (GIM) each bind substrate.

The protein belongs to the succinate/malate CoA ligase beta subunit family. As to quaternary structure, heterodimer of an alpha and a beta subunit. It depends on Mg(2+) as a cofactor.

It is found in the mitochondrion. The enzyme catalyses succinate + ATP + CoA = succinyl-CoA + ADP + phosphate. It participates in carbohydrate metabolism; tricarboxylic acid cycle; succinate from succinyl-CoA (ligase route): step 1/1. In terms of biological role, succinyl-CoA synthetase functions in the citric acid cycle (TCA), coupling the hydrolysis of succinyl-CoA to the synthesis of ATP and thus represents the only step of substrate-level phosphorylation in the TCA. The beta subunit provides nucleotide specificity of the enzyme and binds the substrate succinate, while the binding sites for coenzyme A and phosphate are found in the alpha subunit. This Arabidopsis thaliana (Mouse-ear cress) protein is Succinate--CoA ligase [ADP-forming] subunit beta, mitochondrial.